The following is a 240-amino-acid chain: 1-(5-phosphoribosyl)-5-[(5-phosphoribosylamino)methylideneamino] imidazole-4-carboxamide isomerase (240 aa).

D8 serves as the catalytic Proton acceptor. D130 acts as the Proton donor in catalysis.

This sequence belongs to the HisA/HisF family.

It localises to the cytoplasm. The catalysed reaction is 1-(5-phospho-beta-D-ribosyl)-5-[(5-phospho-beta-D-ribosylamino)methylideneamino]imidazole-4-carboxamide = 5-[(5-phospho-1-deoxy-D-ribulos-1-ylimino)methylamino]-1-(5-phospho-beta-D-ribosyl)imidazole-4-carboxamide. The protein operates within amino-acid biosynthesis; L-histidine biosynthesis; L-histidine from 5-phospho-alpha-D-ribose 1-diphosphate: step 4/9. The protein is 1-(5-phosphoribosyl)-5-[(5-phosphoribosylamino)methylideneamino] imidazole-4-carboxamide isomerase of Flavobacterium johnsoniae (strain ATCC 17061 / DSM 2064 / JCM 8514 / BCRC 14874 / CCUG 350202 / NBRC 14942 / NCIMB 11054 / UW101) (Cytophaga johnsonae).